The primary structure comprises 343 residues: Tryptophan--tRNA ligase (343 aa).

ATP-binding positions include 15–17 and 24–25; these read QPT and GN. The 'HIGH' region motif lies at 16-25; it reads PTSDSLHLGN. Residue Asp-145 coordinates L-tryptophan. ATP is bound by residues 157 to 159, Ile-196, and 205 to 209; these read GED and KMSKS. The 'KMSKS' region signature appears at 205 to 209; sequence KMSKS.

This sequence belongs to the class-I aminoacyl-tRNA synthetase family. In terms of assembly, homodimer.

Its subcellular location is the cytoplasm. It catalyses the reaction tRNA(Trp) + L-tryptophan + ATP = L-tryptophyl-tRNA(Trp) + AMP + diphosphate + H(+). Its function is as follows. Catalyzes the attachment of tryptophan to tRNA(Trp). The sequence is that of Tryptophan--tRNA ligase from Mycobacterium leprae (strain TN).